Consider the following 227-residue polypeptide: ATP synthase F(0) complex subunit a (227 aa).

The next 6 helical transmembrane spans lie at 14 to 34 (FLGIPMILMALALPWLLIPTP), 73 to 93 (LASLMMFLLTLNMLGLMPYIF), 98 to 118 (QLSLNLGLAVPLWLATVLIGM), 137 to 157 (ALIPILIIMQTISLFIRPLAL), 179 to 199 (VFVLMPMMPVVAILTAVLLLL), and 203 to 223 (LEVAVAMIQAYVFILLLSLYL).

The protein belongs to the ATPase A chain family. In terms of assembly, component of the ATP synthase complex composed at least of ATP5F1A/subunit alpha, ATP5F1B/subunit beta, ATP5MC1/subunit c (homooctomer), MT-ATP6/subunit a, MT-ATP8/subunit 8, ATP5ME/subunit e, ATP5MF/subunit f, ATP5MG/subunit g, ATP5MK/subunit k, ATP5MJ/subunit j, ATP5F1C/subunit gamma, ATP5F1D/subunit delta, ATP5F1E/subunit epsilon, ATP5PF/subunit F6, ATP5PB/subunit b, ATP5PD/subunit d, ATP5PO/subunit OSCP. ATP synthase complex consists of a soluble F(1) head domain (subunits alpha(3) and beta(3)) - the catalytic core - and a membrane F(0) domain - the membrane proton channel (subunits c, a, 8, e, f, g, k and j). These two domains are linked by a central stalk (subunits gamma, delta, and epsilon) rotating inside the F1 region and a stationary peripheral stalk (subunits F6, b, d, and OSCP). Interacts with DNAJC30; interaction is direct.

The protein localises to the mitochondrion inner membrane. It catalyses the reaction H(+)(in) = H(+)(out). Its function is as follows. Subunit a, of the mitochondrial membrane ATP synthase complex (F(1)F(0) ATP synthase or Complex V) that produces ATP from ADP in the presence of a proton gradient across the membrane which is generated by electron transport complexes of the respiratory chain. ATP synthase complex consist of a soluble F(1) head domain - the catalytic core - and a membrane F(1) domain - the membrane proton channel. These two domains are linked by a central stalk rotating inside the F(1) region and a stationary peripheral stalk. During catalysis, ATP synthesis in the catalytic domain of F(1) is coupled via a rotary mechanism of the central stalk subunits to proton translocation. With the subunit c (ATP5MC1), forms the proton-conducting channel in the F(0) domain, that contains two crucial half-channels (inlet and outlet) that facilitate proton movement from the mitochondrial intermembrane space (IMS) into the matrix. Protons are taken up via the inlet half-channel and released through the outlet half-channel, following a Grotthuss mechanism. This Gadus morhua (Atlantic cod) protein is ATP synthase F(0) complex subunit a.